We begin with the raw amino-acid sequence, 552 residues long: Nucleoside-diphosphatase mig-23 (552 aa).

The Cytoplasmic segment spans residues 1-6 (MRVSLR). A helical membrane pass occupies residues 7–27 (FTILAVSAMIFFPVIVFIYVV). Over 28-489 (EAHTSPKVIA…IVKETHSSSE (462 aa)) the chain is Lumenal. Glu-174 functions as the Proton acceptor in the catalytic mechanism. 2 N-linked (GlcNAc...) asparagine glycosylation sites follow: Asn-190 and Asn-284. Residues 490-510 (SLWAPLFFLSAVFCLFVLVCA) traverse the membrane as a helical segment. The Cytoplasmic segment spans residues 511-552 (KEQSVLCFDDKRRSSFGMSRSQYSYKMLKENRTSSSFLENFA).

The protein belongs to the GDA1/CD39 NTPase family. Expressed in body wall muscles.

It is found in the golgi apparatus membrane. It catalyses the reaction a ribonucleoside 5'-diphosphate + H2O = a ribonucleoside 5'-phosphate + phosphate + H(+). Its function is as follows. Seems to be able to hydrolyze ADP, UDP and GDP. Supports mig-17 glycosylation and surface expression, which is required for proper migration of distal tip cells during gonad morphogenesis. In Caenorhabditis elegans, this protein is Nucleoside-diphosphatase mig-23 (mig-23).